Reading from the N-terminus, the 254-residue chain is Dolichol-phosphate mannosyltransferase subunit 1 (254 aa).

Proline 25, tyrosine 27, glutamate 29, valine 56, aspartate 58, aspartate 111, alanine 112, aspartate 113, arginine 140, and arginine 227 together coordinate GDP-alpha-D-mannose. Aspartate 113 serves as a coordination point for Mg(2+). Residue aspartate 113 coordinates Mn(2+).

This sequence belongs to the glycosyltransferase 2 family. Component of the dolichol-phosphate mannose (DPM) synthase complex composed of dpm1, dpm2 and dpm3. It depends on Mg(2+) as a cofactor. Mn(2+) serves as cofactor. The cofactor is Ca(2+).

It is found in the endoplasmic reticulum. It carries out the reaction a di-trans,poly-cis-dolichyl phosphate + GDP-alpha-D-mannose = a di-trans,poly-cis-dolichyl beta-D-mannosyl phosphate + GDP. Its pathway is protein modification; protein glycosylation. Its function is as follows. Transfers mannose from GDP-mannose to dolichol monophosphate to form dolichol phosphate mannose (Dol-P-Man) which is the mannosyl donor in pathways leading to N-glycosylation, glycosyl phosphatidylinositol membrane anchoring, and O-mannosylation of proteins; catalytic subunit of the dolichol-phosphate mannose (DPM) synthase complex. This Dictyostelium discoideum (Social amoeba) protein is Dolichol-phosphate mannosyltransferase subunit 1 (dpm1).